Here is a 565-residue protein sequence, read N- to C-terminus: Nephronectin (565 aa).

An N-terminal signal peptide occupies residues 1 to 19; sequence MDFLLALVLVSSLYLQAAA. The region spanning 52-87 is the EGF-like 1 domain; it reads SWGQCQPVCQPRCKHGECIGPNKCKCHPGYAGKTCN. Intrachain disulfides connect C56–C69, C60–C75, C77–C86, C93–C104, C100–C113, and C115–C127. In terms of domain architecture, EGF-like 2; calcium-binding spans 89-128; it reads DLNECGLKPRPCKHRCMNTYGSYKCYCLNGYMLMPDGSCS. Residues 132–168 enclose the EGF-like 3 domain; sequence TCSMANCQYGCDVVKGQIRCQCPSPGLQLAPDGRTCV. Positions 169 to 213 constitute an EGF-like 4; calcium-binding domain; it reads DVDECATGRASCPRFRQCVNTFGSYICKCHKGFNLMYIGGKYQCH. Intrachain disulfides connect C173–C186, C180–C195, C197–C212, C218–C231, C225–C240, and C242–C253. An EGF-like 5; calcium-binding domain is found at 214–254; the sequence is DIDECSLGQYQCSSFARCYNIHGSYKCKCKEGYQGDGLTCV. A disordered region spans residues 301–373; it reads YIPPIITNRP…PPGGITVDNR (73 aa). Residues 304-316 show a composition bias toward low complexity; the sequence is PIITNRPTSKPTT. Residues 317–349 show a composition bias toward pro residues; the sequence is RPTPKPTPIPTPPPPPPLPTELRTPLPPTTPER. The Integrin interaction motif lies at 382 to 384; that stretch reads RGD. The MAM domain occupies 420 to 563; the sequence is HSCNFDHGLC…VSLKKGHCSE (144 aa).

Belongs to the nephronectin family. In terms of assembly, homodimer and homotrimer.

It is found in the secreted. The protein resides in the extracellular space. Its subcellular location is the extracellular matrix. Its function is as follows. Functional ligand of integrin alpha-8/beta-1 in kidney development. Regulates the expression of GDNF with integrin alpha-8/beta-1 which is essential for kidney development. May also play a role in the development and function of various tissues, regulating cell adhesion, spreading and survival through the binding of several integrins. The protein is Nephronectin (NPNT) of Pongo abelii (Sumatran orangutan).